A 269-amino-acid polypeptide reads, in one-letter code: uncharacterized protein (269 aa).

Positions 52-262 (KNVYEQLVAT…RKILVESINK (211 aa)) form a coiled coil.

This is an uncharacterized protein from Caenorhabditis elegans.